The chain runs to 491 residues: UDP-N-acetylmuramoyl-L-alanyl-D-glutamate--2,6-diaminopimelate ligase (491 aa).

Residue Ser30 participates in UDP-N-acetyl-alpha-D-muramoyl-L-alanyl-D-glutamate binding. Residue 108–114 (GTNGKTT) participates in ATP binding. Residues Asn149, 150–151 (TT), Ser177, and Arg185 each bind UDP-N-acetyl-alpha-D-muramoyl-L-alanyl-D-glutamate. Lys217 is subject to N6-carboxylysine. Residues Arg383, 407–410 (DNPR), Gly457, and Glu461 contribute to the meso-2,6-diaminopimelate site. A Meso-diaminopimelate recognition motif motif is present at residues 407–410 (DNPR).

This sequence belongs to the MurCDEF family. MurE subfamily. Mg(2+) is required as a cofactor. In terms of processing, carboxylation is probably crucial for Mg(2+) binding and, consequently, for the gamma-phosphate positioning of ATP.

Its subcellular location is the cytoplasm. It catalyses the reaction UDP-N-acetyl-alpha-D-muramoyl-L-alanyl-D-glutamate + meso-2,6-diaminopimelate + ATP = UDP-N-acetyl-alpha-D-muramoyl-L-alanyl-gamma-D-glutamyl-meso-2,6-diaminopimelate + ADP + phosphate + H(+). Its pathway is cell wall biogenesis; peptidoglycan biosynthesis. Catalyzes the addition of meso-diaminopimelic acid to the nucleotide precursor UDP-N-acetylmuramoyl-L-alanyl-D-glutamate (UMAG) in the biosynthesis of bacterial cell-wall peptidoglycan. This chain is UDP-N-acetylmuramoyl-L-alanyl-D-glutamate--2,6-diaminopimelate ligase, found in Bacillus cereus (strain ATCC 14579 / DSM 31 / CCUG 7414 / JCM 2152 / NBRC 15305 / NCIMB 9373 / NCTC 2599 / NRRL B-3711).